The sequence spans 173 residues: Small ribosomal subunit protein uS5 (173 aa).

The S5 DRBM domain maps to 17-80 (WQERVIQIRR…ADGKKQLIDV (64 aa)).

Belongs to the universal ribosomal protein uS5 family. As to quaternary structure, part of the 30S ribosomal subunit. Contacts proteins S4 and S8.

In terms of biological role, with S4 and S12 plays an important role in translational accuracy. Located at the back of the 30S subunit body where it stabilizes the conformation of the head with respect to the body. The polypeptide is Small ribosomal subunit protein uS5 (Rippkaea orientalis (strain PCC 8801 / RF-1) (Cyanothece sp. (strain PCC 8801))).